Here is a 283-residue protein sequence, read N- to C-terminus: Acetylglutamate kinase (283 aa).

Residues 64-65 (GG), R86, and N178 each bind substrate.

The protein belongs to the acetylglutamate kinase family. ArgB subfamily.

The protein resides in the cytoplasm. The catalysed reaction is N-acetyl-L-glutamate + ATP = N-acetyl-L-glutamyl 5-phosphate + ADP. It participates in amino-acid biosynthesis; L-arginine biosynthesis; N(2)-acetyl-L-ornithine from L-glutamate: step 2/4. Its function is as follows. Catalyzes the ATP-dependent phosphorylation of N-acetyl-L-glutamate. The polypeptide is Acetylglutamate kinase (Lactococcus lactis subsp. cremoris (strain MG1363)).